The primary structure comprises 374 residues: Transcription factor IIIA (374 aa).

7 C2H2-type zinc fingers span residues phenylalanine 23–histidine 47, phenylalanine 53–histidine 77, phenylalanine 83–histidine 107, tyrosine 113–histidine 138, tyrosine 144–histidine 169, proline 204–histidine 226, and tyrosine 236–histidine 261. The C2H2-type 8; atypical zinc-finger motif lies at phenylalanine 267–cysteine 291. The C2H2-type 9 zinc-finger motif lies at tyrosine 349–histidine 374.

It localises to the nucleus. Is required for correct transcription of 5S RNA genes by RNA polymerase III. Also binds the transcribed 5S RNA's. Initiates transcription of the 5S ribosomal RNA gene. This Schizosaccharomyces pombe (strain 972 / ATCC 24843) (Fission yeast) protein is Transcription factor IIIA (sfc2).